Here is a 70-residue protein sequence, read N- to C-terminus: Probable tautomerase RSp0893 (70 aa).

The Proton acceptor; via imino nitrogen role is filled by Pro-2.

Belongs to the 4-oxalocrotonate tautomerase family.

The protein is Probable tautomerase RSp0893 of Ralstonia nicotianae (strain ATCC BAA-1114 / GMI1000) (Ralstonia solanacearum).